The chain runs to 94 residues: Selenoprotein K (94 aa).

A helical transmembrane segment spans residues Val20–Leu42. The interval Val46–Arg94 is disordered. Position 92 (Sec92) is a non-standard amino acid, selenocysteine.

This sequence belongs to the selenoprotein K family. As to quaternary structure, interacts with DERL1, DERL2, DERL3 and SELENOS. The SELENOK-SELENOS complex interacts with VCP. Interacts with ZDHHC6. Cleaved by CAPN2/m-calpain in resting macrophages but not in activated macrophages. Macrophage activation up-regulates expression of the calpain inhibitor CAST/calpastatin, resulting in inhibition of CAPN2 activity. Post-translationally, truncated SELENOK proteins produced by failed UGA/Sec decoding are ubiquitinated by the CRL2(KLHDC2) complex, which recognizes the diglycine (Gly-Gly) at the C-terminus of truncated SELENOK proteins. As to expression, high expression in spleen and intestine (at protein level). Expressed in a range of immune cells including T and B-cells and also in myeloid cells including macrophages, neutrophils and dendritic cells (at protein level).

The protein localises to the endoplasmic reticulum membrane. It localises to the cell membrane. Its function is as follows. Required for Ca(2+) flux in immune cells and plays a role in T-cell proliferation and in T-cell and neutrophil migration. Involved in endoplasmic reticulum-associated degradation (ERAD) of soluble glycosylated proteins. Required for palmitoylation and cell surface expression of CD36 and involved in macrophage uptake of low-density lipoprotein and in foam cell formation. Together with ZDHHC6, required for palmitoylation of ITPR1 in immune cells, leading to regulate ITPR1 stability and function. Plays a role in protection of cells from ER stress-induced apoptosis. Protects cells from oxidative stress when overexpressed in cardiomyocytes. This is Selenoprotein K from Mus musculus (Mouse).